Here is a 581-residue protein sequence, read N- to C-terminus: Activating signal cointegrator 1 (581 aa).

Position 2 is an N-acetylalanine (alanine 2). The interval 100–121 is disordered; sequence DQLKRSRRKGRNKQEVPAFPEP. Residues 167-219 form a C4-type zinc finger; it reads GRHPCDCLGQKHKLINNCLVCGRIVCEQEGSGPCLFCGSLVCTNEEQDILQRD. The interval 200 to 300 is mediates interaction with DDRGK1; the sequence is CLFCGSLVCT…ASDSNQWLSK (101 aa). Residue serine 276 is modified to Phosphoserine. Tyrosine 289 is subject to Phosphotyrosine. The segment at 300 to 400 is mediates interaction with UFL1; the sequence is KVEREMLQKR…WVDNTGSTPQ (101 aa). Residues lysine 324 and lysine 334 each participate in a glycyl lysine isopeptide (Lys-Gly) (interchain with G-Cter in UFM1) cross-link. Residues 390–406 show a composition bias toward polar residues; it reads QWVDNTGSTPQKKTSLS. A disordered region spans residues 390–410; that stretch reads QWVDNTGSTPQKKTSLSAGPR. Positions 437-531 constitute an ASCH domain; the sequence is LSMHQPWASL…FQEQFPDISQ (95 aa).

As to quaternary structure, interacts with the thyroid hormone receptor/TR (via the ligand-binding domain); this interaction requires the presence of thyroid hormone. Interacts with the androgen receptor/AR; in an androgen, testosterone and dihydrotestosterone-dependent manner. Interacts with ESR1 (estrogen ligand-bound); competes with UFSP2. Interacts with UFSP2; competes with ligand-bound ESR1. Interacts with DDRGK1 and UFL1; the interaction with DDRGK1 is direct. Interacts with NCOA1. Interacts with EP300. Part of the ASC-1 complex, that contains TRIP4, ASCC1, ASCC2 and ASCC3. Identified in the RQT (ribosome quality control trigger) complex, that contains ASCC2, ASCC3 and TRIP4. Interacts with NEK6. Interacts with CSRP1. Interacts with ZCCHC4. Post-translationally, phosphorylated by NEK6. Polyufmylated by the UFM1-conjugating system composed of the enzymes UBA5, UFC1 and UFL1. Deufmylated by the protease UFSP2. Ufmylation of TRIP4 is promoted by ligand-bound nuclear receptors that compete with UFSP2 for interaction with TRIP4. Nuclear receptors-induced ufmylation promotes the recruitment of additional transcriptional coactivators like EP300 and NCOA1 and therefore the assembly of a coactivator complex facilitating nuclear receptor-mediated transcription. Ubiquitously expressed. Expressed in the spinal cord, brain, paraspinal ganglia, thyroid, and submandibular glands. Expressed at low level in all the muscles (at protein level) but with higher expression in axial than in limb muscles.

It is found in the nucleus. It localises to the cytoplasm. Its subcellular location is the cytosol. The protein localises to the cytoskeleton. The protein resides in the microtubule organizing center. It is found in the centrosome. Its function is as follows. Transcription coactivator which associates with nuclear receptors, transcriptional coactivators including EP300, CREBBP and NCOA1, and basal transcription factors like TBP and TFIIA to facilitate nuclear receptors-mediated transcription. May thereby play an important role in establishing distinct coactivator complexes under different cellular conditions. Plays a role in thyroid hormone receptor and estrogen receptor transactivation. Also involved in androgen receptor transactivation. Plays a pivotal role in the transactivation of NF-kappa-B, SRF and AP1. Acts as a mediator of transrepression between nuclear receptor and either AP1 or NF-kappa-B. May play a role in the development of neuromuscular junction. May play a role in late myogenic differentiation. Also functions as part of the RQC trigger (RQT) complex that activates the ribosome quality control (RQC) pathway, a pathway that degrades nascent peptide chains during problematic translation. The sequence is that of Activating signal cointegrator 1 from Mus musculus (Mouse).